A 1118-amino-acid chain; its full sequence is MALQLENGRPHHHQVPIMVKKKRTGSGSTGESSGEAPGAPGHGSSQRAERGPQQHGGGRGWVPQHGGRGGGQYQGRGGHYQGRGGQGSHHPGGGPPEYQGRGGPGSHHPGGGPPDYQGRGGSGSHHPGGGPPEYQPRDYQGRGGPRPRGGMPQPYYGGPRGSGGRSVPSGSSRTVPELHQAPHVQYQAPMVSPTPSGAGSSSQPAAEVSSGQVQQQFQQLATRDQSSTSQAIQIAPPSSKSVRFPLRPGKGTYGDRCIVKANHFFAELPDKDLHQYDVSITPEVTSRGVNRAVMFELVTLYRYSHLGGRLPAYDGRKSLYTAGPLPFASRTFEITLQDEEDSLGGGQGTQRRERLFRVVIKFAARADLHHLAMFLAGRQADAPQEALQVLDIVLRELPTTRYSPVGRSFYSPNLGRRQQLGEGLESWRGFYQSIRPTQMGLSLNIDMSSTAFIEPLPVIDFVAQLLNRDISVRPLSDSDRVKIKKALRGVKVEVTHRGNMRRKYRISGLTSQATRELSFPVDDRGTVKTVVQYFLETYGFSIQHTTLPCLQVGNQQRPNYLPMEVCKIVEGQRYSKRLNEKQITALLKVTCQRPQERELDILRTVSHNAYHEDQYAQEFGIKIDERLASVEARVLPPPRLKYHDSGREKDVLPRVGQWNMMNKKMVNGGRVNNWACINFSRNVQDSAARGFCHELAIMCQISGMDFALEPVLPPLTARPEHVERALKARYQDAMNMLRPQGRELDLLIVILPDNNGSLYGDLKRICETDLGLVSQCCLTKHVFKMSKQYLANVALKINVKVGGRNTVLVDALTRRIPLVSDRPTIIFGADVTHPHPGEDSSPSIAAVVASQDWPEVTKYAGLVSAQAHRQELIQDLFKVWQDPHRGTVTGGMIKELLISFKRATGQKPQRIIFYRDGVSEGQFYQVLLYELDAIRKACASLEPNYQPPVTFVVVQKRHHTRLFANNHNDQRTVDRSGNILPGTVVDSKICHPTEFDFYLCSHAGIQGTSRPAHYHVLWDENKFTADELQTLTNNLCYTYARCTRSVSIVPPAYYAHLAAFRARFYMEPETSDSGSMASGAATSRGLPPGVRSARVAGNVAVRPLPALKENVKRVMFYC.

Disordered stretches follow at residues 1-175 (MALQ…SRTV) and 188-246 (APMV…RFPL). The span at 10 to 24 (PHHHQVPIMVKKKRT) shows a compositional bias: basic residues. Residues 25–35 (GSGSTGESSGE) are compositionally biased toward low complexity. 3 stretches are compositionally biased toward gly residues: residues 54-92 (QHGGGRGWVPQHGGRGGGQYQGRGGHYQGRGGQGSHHPG), 100-110 (GRGGPGSHHPG), and 118-128 (GRGGSGSHHPG). 2 stretches are compositionally biased toward low complexity: residues 148–157 (RGGMPQPYYG) and 193–219 (PTPSGAGSSSQPAAEVSSGQVQQQFQQ). Residues 220–241 (LATRDQSSTSQAIQIAPPSSKS) show a composition bias toward polar residues. The region spanning 457–570 (PVIDFVAQLL…LPMEVCKIVE (114 aa)) is the PAZ domain. The Piwi domain maps to 746 to 1067 (LLIVILPDNN…AAFRARFYME (322 aa)).

This sequence belongs to the argonaute family. Ago subfamily.

Its function is as follows. Probably involved in the RNA silencing pathway. May bind to short RNAs such as microRNAs (miRNAs) or short interfering RNAs (siRNAs), and represses the translation of mRNAs which are complementary to them. The sequence is that of Protein argonaute 1B (AGO1B) from Oryza sativa subsp. japonica (Rice).